A 567-amino-acid chain; its full sequence is Multidrug transporter TPO1_1 (567 aa).

Positions 1–71 (MVEEISPKYT…NRRMSRILTG (71 aa)) are disordered. Asparagine 120 is a glycosylation site (N-linked (GlcNAc...) asparagine). 12 helical membrane passes run 128 to 148 (IICIVLCLNCICISMGSSIFA), 157 to 177 (IYHVIPVVAILGVTLYVFGFA), 194 to 214 (GVLVISAFGFAVFQFAVATSK), 224 to 244 (FFGGLIGAAPMAVVPAAFADM), 253 to 273 (AICLFSLGVFVGPILSPVMGS), 283 to 303 (WLEYVTGCFASALFVAVALTF), 358 to 378 (PLLLIITIYNSFVYGILYLML), 396 to 416 (ELPYIALIIGMLVCTAFLWYF), 436 to 456 (LIPMVYAGVIFPIGILWFCWT), 471 to 491 (AGSFIGFGLMGIFLPCLNYII), 498 to 520 (AASAVAANTFMRSAFGAVFPLFA), and 531 to 551 (WAGLLLGLFAAALIPVPLFFL).

This sequence belongs to the major facilitator superfamily. DHA1 family. Polyamines/proton antiporter (TC 2.A.1.2.16) subfamily.

It localises to the cell membrane. Functionally, multidrug resistance transporter involved in resistance to azole antifungal drugs such as the imidazoles miconazole, ketoconazole, and tioconazole; as well as the triazoles itraconazole and fluconazole. Also plays a role in the resistance to other antifungal drug families such as the polyene amphotericin B, the pyrimide analog flucytosine, the fungicide mancozeb, and the polyamine spermine. Decreases the intracellular accumulation of clotrimazole by mediating its extrusion from cells. Involved in virulence by conferring resistance to the human antimicrobial peptide histatin-5. The polypeptide is Multidrug transporter TPO1_1 (Candida glabrata (strain ATCC 2001 / BCRC 20586 / JCM 3761 / NBRC 0622 / NRRL Y-65 / CBS 138) (Yeast)).